Here is a 356-residue protein sequence, read N- to C-terminus: Protein-glutamate methylesterase/protein-glutamine glutaminase 2 (356 aa).

The region spanning 4–121 is the Response regulatory domain; sequence KVLIVDDSAV…KGFLEESSHE (118 aa). Aspartate 55 carries the post-translational modification 4-aspartylphosphate. Positions 169-356 constitute a CheB-type methylesterase domain; that stretch reads FATTERIIAI…LELIAKAICR (188 aa). Active-site residues include serine 181, histidine 207, and aspartate 303.

This sequence belongs to the CheB family. Phosphorylated by CheA. Phosphorylation of the N-terminal regulatory domain activates the methylesterase activity.

It localises to the cytoplasm. It carries out the reaction [protein]-L-glutamate 5-O-methyl ester + H2O = L-glutamyl-[protein] + methanol + H(+). The catalysed reaction is L-glutaminyl-[protein] + H2O = L-glutamyl-[protein] + NH4(+). In terms of biological role, involved in chemotaxis. Part of a chemotaxis signal transduction system that modulates chemotaxis in response to various stimuli. Catalyzes the demethylation of specific methylglutamate residues introduced into the chemoreceptors (methyl-accepting chemotaxis proteins or MCP) by CheR. Also mediates the irreversible deamidation of specific glutamine residues to glutamic acid. In Chromobacterium violaceum (strain ATCC 12472 / DSM 30191 / JCM 1249 / CCUG 213 / NBRC 12614 / NCIMB 9131 / NCTC 9757 / MK), this protein is Protein-glutamate methylesterase/protein-glutamine glutaminase 2.